A 426-amino-acid polypeptide reads, in one-letter code: Branched-chain amino acid permease BrnQ (426 aa).

12 consecutive transmembrane segments (helical) span residues 11-31, 41-61, 76-96, 111-131, 140-160, 186-206, 219-239, 268-288, 296-316, 324-344, 358-378, and 390-410; these read LMLF…MLGL, ILGF…AVVL, IFGL…YALP, NALY…ALSW, LGKW…VLSV, GYMT…ISAF, VVSA…LGSI, IMFV…LISA, LLPG…SFGV, VLAV…TLVF, TYLF…IPAL, and MSLG…AIDW.

This sequence belongs to the branched chain amino acid transporter family.

Its subcellular location is the cell membrane. Functionally, branched chain amino acid transport system, which transports isoleucine. In Corynebacterium glutamicum (strain ATCC 13032 / DSM 20300 / JCM 1318 / BCRC 11384 / CCUG 27702 / LMG 3730 / NBRC 12168 / NCIMB 10025 / NRRL B-2784 / 534), this protein is Branched-chain amino acid permease BrnQ.